Consider the following 875-residue polypeptide: Alanine--tRNA ligase (875 aa).

4 residues coordinate Zn(2+): H563, H567, C665, and H669.

Belongs to the class-II aminoacyl-tRNA synthetase family. It depends on Zn(2+) as a cofactor.

It is found in the cytoplasm. The enzyme catalyses tRNA(Ala) + L-alanine + ATP = L-alanyl-tRNA(Ala) + AMP + diphosphate. In terms of biological role, catalyzes the attachment of alanine to tRNA(Ala) in a two-step reaction: alanine is first activated by ATP to form Ala-AMP and then transferred to the acceptor end of tRNA(Ala). Also edits incorrectly charged Ser-tRNA(Ala) and Gly-tRNA(Ala) via its editing domain. The protein is Alanine--tRNA ligase of Shewanella pealeana (strain ATCC 700345 / ANG-SQ1).